A 550-amino-acid polypeptide reads, in one-letter code: Glucose-6-phosphate isomerase (550 aa).

Glu356 functions as the Proton donor in the catalytic mechanism. Catalysis depends on residues His387 and Lys515.

The protein belongs to the GPI family.

The protein resides in the cytoplasm. The catalysed reaction is alpha-D-glucose 6-phosphate = beta-D-fructose 6-phosphate. The protein operates within carbohydrate biosynthesis; gluconeogenesis. It functions in the pathway carbohydrate degradation; glycolysis; D-glyceraldehyde 3-phosphate and glycerone phosphate from D-glucose: step 2/4. In terms of biological role, catalyzes the reversible isomerization of glucose-6-phosphate to fructose-6-phosphate. This chain is Glucose-6-phosphate isomerase, found in Aliivibrio salmonicida (strain LFI1238) (Vibrio salmonicida (strain LFI1238)).